Consider the following 318-residue polypeptide: Methionyl-tRNA formyltransferase (318 aa).

112 to 115 (SILP) is a (6S)-5,6,7,8-tetrahydrofolate binding site.

The protein belongs to the Fmt family.

It catalyses the reaction L-methionyl-tRNA(fMet) + (6R)-10-formyltetrahydrofolate = N-formyl-L-methionyl-tRNA(fMet) + (6S)-5,6,7,8-tetrahydrofolate + H(+). Functionally, attaches a formyl group to the free amino group of methionyl-tRNA(fMet). The formyl group appears to play a dual role in the initiator identity of N-formylmethionyl-tRNA by promoting its recognition by IF2 and preventing the misappropriation of this tRNA by the elongation apparatus. This chain is Methionyl-tRNA formyltransferase, found in Shewanella frigidimarina (strain NCIMB 400).